The following is an 805-amino-acid chain: U-box domain-containing protein 32 (805 aa).

Disordered regions lie at residues Ser-181–Leu-205 and Glu-226–Gly-284. Residues Glu-226 to Pro-239 show a composition bias toward basic and acidic residues. Low complexity predominate over residues Phe-245–Val-257. Residues Leu-331–Lys-434 adopt a coiled-coil conformation. The region spanning Phe-460–Val-718 is the Protein kinase domain. ATP contacts are provided by residues Leu-466–Val-474 and Lys-487. Positions Arg-734–Trp-805 constitute a U-box domain.

It belongs to the protein kinase superfamily. Ser/Thr protein kinase family.

The enzyme catalyses S-ubiquitinyl-[E2 ubiquitin-conjugating enzyme]-L-cysteine + [acceptor protein]-L-lysine = [E2 ubiquitin-conjugating enzyme]-L-cysteine + N(6)-ubiquitinyl-[acceptor protein]-L-lysine.. It functions in the pathway protein modification; protein ubiquitination. Functionally, functions as an E3 ubiquitin ligase. This is U-box domain-containing protein 32 (PUB32) from Arabidopsis thaliana (Mouse-ear cress).